The primary structure comprises 161 residues: Cyclic pyranopterin monophosphate synthase (161 aa).

Substrate-binding positions include 75-77 and 113-114; these read LCH and ME. Residue Asp128 is part of the active site.

The protein belongs to the MoaC family. Homohexamer; trimer of dimers.

The catalysed reaction is (8S)-3',8-cyclo-7,8-dihydroguanosine 5'-triphosphate = cyclic pyranopterin phosphate + diphosphate. The protein operates within cofactor biosynthesis; molybdopterin biosynthesis. Its function is as follows. Catalyzes the conversion of (8S)-3',8-cyclo-7,8-dihydroguanosine 5'-triphosphate to cyclic pyranopterin monophosphate (cPMP). The protein is Cyclic pyranopterin monophosphate synthase of Cupriavidus pinatubonensis (strain JMP 134 / LMG 1197) (Cupriavidus necator (strain JMP 134)).